A 1475-amino-acid polypeptide reads, in one-letter code: MSNSIGRNVLHQSLLCSTVFEHQSNRHSSGIPANSLFQAVSINQPAGASAARKSPLSTKFYGTSLNARPKMAMGRHRPVLITPRAVLAVDSASELAGKFNLEGNVELQITVGAPTPGSLTQVNIEISYSSNSLLLHWGAIRDKKEKWVLPSRPPDGTKILKNRALRTPFVSSGSKSLVKLEIDDPAIEAVEFLILDEAQNKWFKNNGANFHVKLPSERSLIQNVSVPEDLVQTQAYLRWERKGKQIYTPEQEKEEYEAARTELLEEIVRGTSVEDLRAKLTNKNDRQEIKESSSHGTKNAIPDDLVQIQSYIRWERAGKPNYSADQQLREFEEARKELQSELEKGISLDEIWKKITKGEIQTKVSDQLKTKKYFRTERIQRKQRDFMQILNKHVAEPTEKKNISVEPKALTPVELFVGATEEQEGDSILNKKIYKLAGKELLVLVHKPGGKTKIHLATDGKEPLILHWALSKKAGEWLAPPPSVLPAGSVLLSGSVETTFTTSSLADLPYQVQSIEIEIEEEGYVGMPSVLQSGGNWIKNKGSDFYVDFSYESKQVQQDFGDGKGTAKALLEKIAGLEIEAQKSFMHRFNIAADLIQEAKEAGELGFAGILVWMRFMATRQLIWNKNYNVKPREISKAQDRLTDLLQNVYISNPEYREIVRMILSTVGRGGEGDVGQRIRDEILVIQRNNNCKGGMMEEWHQKLHNNTSPDDVIICQALIDYIKSDFDISAYWKTLNDNGITKERLLSYDRAIHSEPNFRRDQKDGLLRDLGNYMRTLKAVHSGADLESAITNCLGYRSEGQGFMVGVQINPIPNLPSGFPELLQFVSEHVEDRNVEALLEGLLEARQEIRPLLCKHNDRLKDLLFLDIALESSVRTAIEKGYEELNEAGPEKIMYFVSLILENLALSLDDNEDLIYCLKGWSNALSMSKSKSDNWALFAKSVLDRTRLALAGKADWYQKVLQPSAEYLGTLLSVDKWAVDIFTEEMIRAGSAAALSLLLNRLDPVLRKTASLGSWQVISPVEVFGYVAVVDELLAVQDKSYDQPTILLARRVKGEEEIPHGTVAVLTADMPDVLSHVSVRARNCKVCFATCFDPNILADLQSNEGKMLHLKPTSADIAYSVVEGSELQDSSSANLKEEDGPSSSVALVKKQFAGRYAITSDEFTGELVGAKSRNIAYLKGKVPSWIGIPTSVALPFGVFEKVLSDDINQAVAEKLQILKQKLGEEDHSALREIRETVLQMKAPNQLVQELKTEMKSSGMPWPGDEGEQRWEQAWMAIKKVWASKWNERAFFSTRRVKLDHEYLCMAVLVQEIINADYAFVIHTTNPSSGDSSEIYAEVVKGLGETLVGAYPGRALSFVCKKNDLKSPRVLGYPSKPIGLFIRRSIIFRSDSNGEDLEGYAGAGLYDSVPMDEAEKVVLDYSSDHLITDGHFQQSILSSIARAGCEIEELFGSAQDIEGVVRDGKIYVVQTRPQM.

A chloroplast-targeting transit peptide spans 1–85 (MSNSIGRNVL…HRPVLITPRA (85 aa)). Histidine 1077 functions as the Tele-phosphohistidine intermediate in the catalytic mechanism.

The protein belongs to the PEP-utilizing enzyme family. Homodimer. Requires Mg(2+) as cofactor.

The protein resides in the plastid. It localises to the chloroplast. It carries out the reaction [(1-&gt;4)-alpha-D-glucosyl](n) + n ATP + n H2O = [(1-&gt;4)-6-phospho-alpha-D-glucosyl](n) + n AMP + n phosphate + 2n H(+). Functionally, mediates the incorporation of phosphate into starch-like alpha-glucan, mostly at the C-6 position of glucose units. Acts as an overall regulator of starch mobilization. Required for starch degradation, suggesting that the phosphate content of starch regulates its degradability. The chain is Alpha-glucan water dikinase, chloroplastic (R1) from Citrus reticulata (Tangerine).